Consider the following 133-residue polypeptide: ATP synthase epsilon chain (133 aa).

The protein belongs to the ATPase epsilon chain family. As to quaternary structure, F-type ATPases have 2 components, CF(1) - the catalytic core - and CF(0) - the membrane proton channel. CF(1) has five subunits: alpha(3), beta(3), gamma(1), delta(1), epsilon(1). CF(0) has three main subunits: a, b and c.

Its subcellular location is the cell membrane. Its function is as follows. Produces ATP from ADP in the presence of a proton gradient across the membrane. The chain is ATP synthase epsilon chain from Staphylococcus haemolyticus (strain JCSC1435).